The chain runs to 100 residues: uncharacterized protein (100 aa).

As to quaternary structure, may interact with ribosomes.

This is an uncharacterized protein from Saccharomyces cerevisiae (strain ATCC 204508 / S288c) (Baker's yeast).